A 1017-amino-acid chain; its full sequence is MDEKTIKKSILSSSNDEKIIYKSRIKKFQKNHKFYIILLVFIAILQFISIAFFTRGFLLSRHVLDNISSQNETSKLPPRFNKAVILVIDALRFDFAIPVNESHSNYNLNYHNNILSLYDSFASDKDASSLLLKFIADPPTTTLQRLKGLTTGSLPTFIDAGSNFDGTVIEEDNFLKQLHLANKTVKFAGDDTWMALFHPFLSNDSFPLESLNVWDLDTVDNGVMDYFHDHLQQDKEWDVMIGHMLGIDHVGHKYGPDHFTMREKQIQVDQFIDWILKSIDDDTLLVILGDHGMDHTGNHGGDSIDELESTLFLYSKKPDMWRLKETSNYNIDNLGHDYRSVRQIDLVSSLALLMGQPIPFNNLGWPIDEIARNDREWSQFVNSAISQLQLYKDTMQIHHGNDEILEPLAKNISNTPPTSDPEKFVKLGHKYQKVFLQTCEELWAKFDYYSIATGITLLATSLVLLISITKLIPSIVVNQMVPEFVPGIIIMVLVTNLCFHGIFYVYQQPSFVDQFWGTLLATAIGIIIGCYITIFDRYNFIWIAMRLGETLADYWSRIAVMFMIIHALLFTSNSFTIWEDRIVAFLLSTFGMLTLYEFVFLPKRQSTTALLTATISEKEGTTSGVNPSTANSNYLPLTRFARLLGGYHSAVLIIFTRLASMITICREEQGEYCIPTFNNQNNSSWWVLGLCFLMIFILPACITGYYNLTSSYQAAAPIWINVFLKGILGLNFVYWSLTSLENNSAVIAIPFLRDVTIFKFTLARIIAGFSLIASNVGWLMGPLCIKLNIHNTDVKSHEATILGYTNIYGSEFFLLVINVLISILLFNKPLAQLSYFLMCNQLLSILEIIDLLKLKENIIGPIALGLLSYQHFFTTGHQATIPSVQWDIGFMLSEKVTFPFTQIAIILNTFGPHILVSLSVALLTLWSQPPDVLKPQTLLGRIVSNCGILLTYNTILCLSSFIWVTHFRRHLMVWKIFCPRFIFASLSLIVTQLVVTFGTIAFASGRLIKHINDIFWK.

Residues 34–54 (FYIILLVFIAILQFISIAFFT) traverse the membrane as a helical segment. N-linked (GlcNAc...) asparagine glycosylation is found at Asn66, Asn71, Asn100, Asn182, and Asn203. A helical transmembrane segment spans residues 347 to 367 (VSSLALLMGQPIPFNNLGWPI). The N-linked (GlcNAc...) asparagine glycan is linked to Asn411. 6 helical membrane-spanning segments follow: residues 457-477 (LLATSLVLLISITKLIPSIVV), 484-504 (FVPGIIIMVLVTNLCFHGIFY), 515-535 (FWGTLLATAIGIIIGCYITIF), 558-578 (IAVMFMIIHALLFTSNSFTIW), 582-602 (IVAFLLSTFGMLTLYEFVFLP), and 644-664 (LGGYHSAVLIIFTRLASMITI). Residues Asn681 and Asn682 are each glycosylated (N-linked (GlcNAc...) asparagine). The chain crosses the membrane as a helical span at residues 685-705 (WWVLGLCFLMIFILPACITGY). Asn707 is a glycosylation site (N-linked (GlcNAc...) asparagine). The chain crosses the membrane as a helical span at residues 715–735 (AAPIWINVFLKGILGLNFVYW). Asn742 is a glycosylation site (N-linked (GlcNAc...) asparagine). 6 helical membrane-spanning segments follow: residues 765 to 785 (IIAGFSLIASNVGWLMGPLCI), 806 to 826 (NIYGSEFFLLVINVLISILLF), 829 to 849 (PLAQLSYFLMCNQLLSILEII), 903 to 923 (IAIILNTFGPHILVSLSVALL), 947 to 967 (GILLTYNTILCLSSFIWVTHF), and 981 to 1001 (FIFASLSLIVTQLVVTFGTIA).

This sequence belongs to the PIGG/PIGN/PIGO family. PIGO subfamily. In terms of processing, glycosylated.

It localises to the endoplasmic reticulum membrane. It participates in glycolipid biosynthesis; glycosylphosphatidylinositol-anchor biosynthesis. In terms of biological role, involved in glycosylphosphatidylinositol-anchor biosynthesis. Transfers ethanolamine phosphate to the GPI third mannose which links the GPI-anchor to the C-terminus of the proteins by an amide bond. Involved in cell wall biosynthesis. This Saccharomyces cerevisiae (strain ATCC 204508 / S288c) (Baker's yeast) protein is GPI ethanolamine phosphate transferase 3 (GPI13).